A 116-amino-acid chain; its full sequence is MKRQIAERSGRDGERRAALWLRAKGWSILAQRVKTPRGEIDLVAKRGKLVAFVEVKWRKTRAELDHAIDEYRLSRVAAAAEAIAHDYAQDGEDYRIDVILLAPGSFPRHIANAWQP.

This sequence belongs to the UPF0102 family.

This Erythrobacter litoralis (strain HTCC2594) protein is UPF0102 protein ELI_05985.